The following is a 282-amino-acid chain: Probable phosphatase C1620.13 (282 aa).

His-61 (tele-phosphohistidine intermediate) is an active-site residue. Glu-135 functions as the Proton donor/acceptor in the catalytic mechanism.

Belongs to the phosphoglycerate mutase family. BPG-dependent PGAM subfamily.

The protein resides in the nucleus. This is Probable phosphatase C1620.13 from Schizosaccharomyces pombe (strain 972 / ATCC 24843) (Fission yeast).